Consider the following 122-residue polypeptide: Flagellar protein FliT (122 aa).

Residues 1-50 (MERQQQLLAAYQQIHSLSSQMIALAQTERWEDLVELELAYVTAVESTAAF) form a required for homodimerization region. The segment at 60–98 (LQELLRNKLQQILDNETELKRLLQQRMDQLKELIGQSTR) is fliD binding.

The protein belongs to the FliT family. Homodimer. Interacts with FliD and FlhC.

It localises to the cytoplasm. The protein resides in the cytosol. Dual-function protein that regulates the transcription of class 2 flagellar operons and that also acts as an export chaperone for the filament-capping protein FliD. As a transcriptional regulator, acts as an anti-FlhDC factor; it directly binds FlhC, thus inhibiting the binding of the FlhC/FlhD complex to class 2 promoters, resulting in decreased expression of class 2 flagellar operons. As a chaperone, effects FliD transition to the membrane by preventing its premature polymerization, and by directing it to the export apparatus. The sequence is that of Flagellar protein FliT from Serratia proteamaculans (strain 568).